Here is a 62-residue protein sequence, read N- to C-terminus: Sperm protamine P1 (62 aa).

The segment at Met-1–Tyr-62 is disordered.

The protein belongs to the protamine P1 family. Testis.

The protein resides in the nucleus. It is found in the chromosome. Functionally, protamines substitute for histones in the chromatin of sperm during the haploid phase of spermatogenesis. They compact sperm DNA into a highly condensed, stable and inactive complex. The chain is Sperm protamine P1 (PRM1) from Bettongia penicillata (Brush-tailed bettong).